Here is a 734-residue protein sequence, read N- to C-terminus: Putative K(+)-stimulated pyrophosphate-energized sodium pump (734 aa).

Transmembrane regions (helical) follow at residues 3-23 (SILF…AYYF), 58-78 (IVGC…YGFH), 82-102 (VWVP…GFLG), 134-154 (VMGL…YLLL), and 169-189 (LCVI…QALF). Lys199 contacts substrate. Mg(2+) contacts are provided by Asp202, Asp206, Asn229, and Asp232. Helical transmembrane passes span 244-264 (LYES…AAFI), 275-295 (AVIA…IGIF), 314-334 (FGTN…LWLL), 336-356 (LDNW…GIVI), 377-397 (SGKT…MLST), 398-418 (AIPV…ASGF), and 423-443 (VGMG…TLGI). Residue Asp455 coordinates Mg(2+). Helical transmembrane passes span 491–511 (FAIG…IEEI), 557–577 (GMFL…NAVG), 629–649 (ILAP…GLLI), and 650–670 (GGLS…GAWD). Residues Asp670, Asp696, and Asp700 each contribute to the Ca(2+) site. A substrate-binding site is contributed by Lys703. The chain crosses the membrane as a helical span at residues 712–732 (ILIKLMSMVAIVMAGLTVAWS).

This sequence belongs to the H(+)-translocating pyrophosphatase (TC 3.A.10) family. K(+)-stimulated subfamily. Homodimer. It depends on Mg(2+) as a cofactor.

Its subcellular location is the cell inner membrane. It carries out the reaction Na(+)(in) + diphosphate + H2O = Na(+)(out) + 2 phosphate + H(+). Requires K(+) for maximal activity. Its function is as follows. Sodium pump that utilizes the energy of pyrophosphate hydrolysis as the driving force for Na(+) movement across the membrane. This is Putative K(+)-stimulated pyrophosphate-energized sodium pump from Bacteroides thetaiotaomicron (strain ATCC 29148 / DSM 2079 / JCM 5827 / CCUG 10774 / NCTC 10582 / VPI-5482 / E50).